The sequence spans 346 residues: Elongation factor 1-alpha (346 aa).

The region spanning 1 to 127 (GTSQADVALL…DNVEPPKRPS (127 aa)) is the tr-type G domain. 49 to 52 (NKMD) serves as a coordination point for GTP.

Belongs to the TRAFAC class translation factor GTPase superfamily. Classic translation factor GTPase family. EF-Tu/EF-1A subfamily.

Its subcellular location is the cytoplasm. Functionally, this protein promotes the GTP-dependent binding of aminoacyl-tRNA to the A-site of ribosomes during protein biosynthesis. This chain is Elongation factor 1-alpha, found in Eimeria bovis.